Reading from the N-terminus, the 239-residue chain is Demethylmenaquinone methyltransferase (239 aa).

Residues threonine 68, aspartate 86, and 111–112 each bind S-adenosyl-L-methionine; that span reads NG.

Belongs to the class I-like SAM-binding methyltransferase superfamily. MenG/UbiE family.

The enzyme catalyses a 2-demethylmenaquinol + S-adenosyl-L-methionine = a menaquinol + S-adenosyl-L-homocysteine + H(+). The protein operates within quinol/quinone metabolism; menaquinone biosynthesis; menaquinol from 1,4-dihydroxy-2-naphthoate: step 2/2. Functionally, methyltransferase required for the conversion of demethylmenaquinol (DMKH2) to menaquinol (MKH2). The polypeptide is Demethylmenaquinone methyltransferase (Tropheryma whipplei (strain TW08/27) (Whipple's bacillus)).